Reading from the N-terminus, the 122-residue chain is Large ribosomal subunit protein bL12 (122 aa).

The protein belongs to the bacterial ribosomal protein bL12 family. In terms of assembly, homodimer. Part of the 50S ribosomal subunit; present in 4 copies per ribosome. Forms part of the ribosomal stalk which helps the ribosome interact with GTP-bound translation factors. Forms a pentameric L10(L12)2(L12)2 complex, where L10 forms an elongated spine to which 2 L12 dimers bind in a sequential fashion.

Functionally, forms part of the ribosomal stalk which helps the ribosome interact with GTP-bound translation factors. Is thus essential for accurate translation. The chain is Large ribosomal subunit protein bL12 from Geobacillus stearothermophilus (Bacillus stearothermophilus).